A 283-amino-acid chain; its full sequence is Prepilin leader peptidase/N-methyltransferase (283 aa).

The next 7 membrane-spanning stretches (helical) occupy residues 13–33 (VWLL…NVVI), 106–126 (WRYP…GLLW), 128–148 (PGLA…LAAI), 153–173 (QLLP…FNLA), 176–196 (FVPL…LWLI), 216–236 (LLAA…VLIA), and 259–279 (LAFG…NVLG).

The protein belongs to the peptidase A24 family.

Its subcellular location is the cell inner membrane. The catalysed reaction is Typically cleaves a -Gly-|-Phe- bond to release an N-terminal, basic peptide of 5-8 residues from type IV prepilin, and then N-methylates the new N-terminal amino group, the methyl donor being S-adenosyl-L-methionine.. Functionally, plays a role in type II pseudopili formation by proteolytically removing the leader sequence from substrate proteins and subsequently monomethylating the alpha-amino group of the newly exposed N-terminal phenylalanine. Substrates include proteins required for biogenesis of the type II general secretory apparatus. The protein is Prepilin leader peptidase/N-methyltransferase (outO) of Dickeya chrysanthemi (Pectobacterium chrysanthemi).